The chain runs to 359 residues: Dual-specificity RNA methyltransferase RlmN (359 aa).

Residue E90 is the Proton acceptor of the active site. The region spanning 109-342 (HQERYTVCIS…CTIRESKGLD (234 aa)) is the Radical SAM core domain. A disulfide bond links C116 and C347. 3 residues coordinate [4Fe-4S] cluster: C123, C127, and C130. Residues 173-174 (GE), S205, 228-230 (SLH), and N304 each bind S-adenosyl-L-methionine. The S-methylcysteine intermediate role is filled by C347.

Belongs to the radical SAM superfamily. RlmN family. [4Fe-4S] cluster is required as a cofactor.

Its subcellular location is the cytoplasm. The enzyme catalyses adenosine(2503) in 23S rRNA + 2 reduced [2Fe-2S]-[ferredoxin] + 2 S-adenosyl-L-methionine = 2-methyladenosine(2503) in 23S rRNA + 5'-deoxyadenosine + L-methionine + 2 oxidized [2Fe-2S]-[ferredoxin] + S-adenosyl-L-homocysteine. It carries out the reaction adenosine(37) in tRNA + 2 reduced [2Fe-2S]-[ferredoxin] + 2 S-adenosyl-L-methionine = 2-methyladenosine(37) in tRNA + 5'-deoxyadenosine + L-methionine + 2 oxidized [2Fe-2S]-[ferredoxin] + S-adenosyl-L-homocysteine. Its function is as follows. Specifically methylates position 2 of adenine 2503 in 23S rRNA and position 2 of adenine 37 in tRNAs. m2A2503 modification seems to play a crucial role in the proofreading step occurring at the peptidyl transferase center and thus would serve to optimize ribosomal fidelity. The protein is Dual-specificity RNA methyltransferase RlmN of Sulfurovum sp. (strain NBC37-1).